We begin with the raw amino-acid sequence, 44 residues long: Large ribosomal subunit protein bL34 (44 aa).

Composition is skewed to basic residues over residues 1 to 14 and 31 to 44; these read MKRT…KRQK and LSAR…RLAV. The segment at 1–44 is disordered; it reads MKRTLGGTTRKRQKTSGFRARMRTASGRRVLSARRRRGRHRLAV.

Belongs to the bacterial ribosomal protein bL34 family.

In Gloeobacter violaceus (strain ATCC 29082 / PCC 7421), this protein is Large ribosomal subunit protein bL34.